We begin with the raw amino-acid sequence, 152 residues long: Large ribosomal subunit protein bL9 (152 aa).

The protein belongs to the bacterial ribosomal protein bL9 family.

Functionally, binds to the 23S rRNA. The chain is Large ribosomal subunit protein bL9 from Chlorobaculum tepidum (strain ATCC 49652 / DSM 12025 / NBRC 103806 / TLS) (Chlorobium tepidum).